The primary structure comprises 294 residues: Cytidine deaminase (294 aa).

2 CMP/dCMP-type deaminase domains span residues 48–168 (DDDA…FGPT) and 187–294 (AETD…RVTF). 89–91 (NME) provides a ligand contact to substrate. His102 contacts Zn(2+). Glu104 (proton donor) is an active-site residue. Residues Cys129 and Cys132 each coordinate Zn(2+).

It belongs to the cytidine and deoxycytidylate deaminase family. Homodimer. It depends on Zn(2+) as a cofactor.

It catalyses the reaction cytidine + H2O + H(+) = uridine + NH4(+). The enzyme catalyses 2'-deoxycytidine + H2O + H(+) = 2'-deoxyuridine + NH4(+). This enzyme scavenges exogenous and endogenous cytidine and 2'-deoxycytidine for UMP synthesis. This is Cytidine deaminase from Yersinia pseudotuberculosis serotype O:1b (strain IP 31758).